We begin with the raw amino-acid sequence, 374 residues long: GDSL esterase/lipase 1 (374 aa).

Positions methionine 1–cysteine 25 are cleaved as a signal peptide. Asparagine 34 is a glycosylation site (N-linked (GlcNAc...) asparagine). Serine 44 acts as the Nucleophile in catalysis. N-linked (GlcNAc...) asparagine glycans are attached at residues asparagine 184, asparagine 203, and asparagine 330. Active-site charge relay system residues include aspartate 338 and histidine 341. Asparagine 360 is a glycosylation site (N-linked (GlcNAc...) asparagine).

This sequence belongs to the 'GDSL' lipolytic enzyme family.

The protein localises to the secreted. In terms of biological role, confers resistance to the necrotrophic fungus Alternaria brassicicola. Possesses lipase and antimicrobial activities that directly disrupt fungal spore integrity. Triggers systemic resistance, mostly by the ethylene-dependent pathway. The chain is GDSL esterase/lipase 1 from Arabidopsis thaliana (Mouse-ear cress).